The following is a 56-amino-acid chain: Small ribosomal subunit protein bS21 (56 aa).

This sequence belongs to the bacterial ribosomal protein bS21 family.

In Synechococcus sp. (strain RCC307), this protein is Small ribosomal subunit protein bS21.